A 276-amino-acid chain; its full sequence is 4-chlorobenzoyl coenzyme A dehalogenase-2 (276 aa).

A substrate-binding site is contributed by 66–71; it reads AGFDLE. The active-site Proton acceptor is the histidine 93. Glycine 117 is a substrate binding site. The active-site Nucleophile is the aspartate 148. Arginine 261 contacts substrate.

It belongs to the enoyl-CoA hydratase/isomerase family. As to quaternary structure, homotetramer.

It catalyses the reaction 4-chlorobenzoyl-CoA + H2O = 4-hydroxybenzoyl-CoA + chloride + H(+). The protein operates within xenobiotic degradation; 4-chlorobenzoate degradation; 4-hydroxybenzoate from 4-chlorobenzoate: step 2/3. In terms of biological role, dehalogenates 4-chlorobenzoyl-CoA, 4-iodobenzoyl-CoA, 4-bromobenzoyl-CoA and, at a slower rate, 4-fluorobenzoyl-CoA. Does not dehalogenate 2-chlorobenzoyl-CoA or 3-chlorobenzoyl-CoA. In Arthrobacter sp, this protein is 4-chlorobenzoyl coenzyme A dehalogenase-2.